The following is a 999-amino-acid chain: Probable beta-galactosidase C (999 aa).

The signal sequence occupies residues 1 to 21; sequence MFFFRFLTTVLLLFNAKLLVA. N-linked (GlcNAc...) asparagine glycosylation is present at N25. Substrate contacts are provided by Y80, N125, E127, and N185. The active-site Proton donor is the E186. The N-linked (GlcNAc...) asparagine glycan is linked to N195. Y249 contributes to the substrate binding site. The cysteines at positions 255 and 302 are disulfide-linked. N274 carries N-linked (GlcNAc...) asparagine glycosylation. E285 acts as the Nucleophile in catalysis. Y351 contributes to the substrate binding site. N389, N441, N512, N519, N600, N675, N713, N757, N808, and N897 each carry an N-linked (GlcNAc...) asparagine glycan.

This sequence belongs to the glycosyl hydrolase 35 family.

The protein resides in the secreted. It carries out the reaction Hydrolysis of terminal non-reducing beta-D-galactose residues in beta-D-galactosides.. Functionally, cleaves beta-linked terminal galactosyl residues from gangliosides, glycoproteins, and glycosaminoglycans. The chain is Probable beta-galactosidase C (lacC) from Talaromyces marneffei (strain ATCC 18224 / CBS 334.59 / QM 7333) (Penicillium marneffei).